The sequence spans 449 residues: Tubulin alpha-2B chain (449 aa).

Q11 provides a ligand contact to GTP. At K40 the chain carries N6-acetyllysine. GTP-binding residues include E71, S140, G144, T145, T179, N206, and N228. A Mg(2+)-binding site is contributed by E71. E254 is a catalytic residue.

It belongs to the tubulin family. Dimer of alpha and beta chains. A typical microtubule is a hollow water-filled tube with an outer diameter of 25 nm and an inner diameter of 15 nM. Alpha-beta heterodimers associate head-to-tail to form protofilaments running lengthwise along the microtubule wall with the beta-tubulin subunit facing the microtubule plus end conferring a structural polarity. Microtubules usually have 13 protofilaments but different protofilament numbers can be found in some organisms and specialized cells. The cofactor is Mg(2+). In terms of processing, acetylation of alpha chains at Lys-40 stabilizes microtubules and affects affinity and processivity of microtubule motors. This modification has a role in multiple cellular functions, ranging from cell motility, cell cycle progression or cell differentiation to intracellular trafficking and signaling.

It is found in the cytoplasm. The protein localises to the cytoskeleton. Its subcellular location is the spindle. It localises to the nucleus. The catalysed reaction is GTP + H2O = GDP + phosphate + H(+). In terms of biological role, tubulin is the major constituent of microtubules, a cylinder consisting of laterally associated linear protofilaments composed of alpha- and beta-tubulin heterodimers. Microtubules grow by the addition of GTP-tubulin dimers to the microtubule end, where a stabilizing cap forms. Below the cap, tubulin dimers are in GDP-bound state, owing to GTPase activity of alpha-tubulin. The sequence is that of Tubulin alpha-2B chain (ALTBE) from Physarum polycephalum (Slime mold).